The primary structure comprises 117 residues: Large ribosomal subunit protein uL22 (117 aa).

It belongs to the universal ribosomal protein uL22 family. Part of the 50S ribosomal subunit.

Functionally, this protein binds specifically to 23S rRNA; its binding is stimulated by other ribosomal proteins, e.g. L4, L17, and L20. It is important during the early stages of 50S assembly. It makes multiple contacts with different domains of the 23S rRNA in the assembled 50S subunit and ribosome. Its function is as follows. The globular domain of the protein is located near the polypeptide exit tunnel on the outside of the subunit, while an extended beta-hairpin is found that lines the wall of the exit tunnel in the center of the 70S ribosome. This chain is Large ribosomal subunit protein uL22, found in Chlorobium phaeobacteroides (strain BS1).